Reading from the N-terminus, the 233-residue chain is Small ribosomal subunit protein uS3 (233 aa).

The KH type-2 domain occupies 39–107; it reads VRQFLTKELS…PAQINIAEVR (69 aa).

It belongs to the universal ribosomal protein uS3 family. As to quaternary structure, part of the 30S ribosomal subunit. Forms a tight complex with proteins S10 and S14.

Binds the lower part of the 30S subunit head. Binds mRNA in the 70S ribosome, positioning it for translation. In Vibrio vulnificus (strain CMCP6), this protein is Small ribosomal subunit protein uS3.